The sequence spans 304 residues: Olfactory receptor 8G2 (304 aa).

At 1-41 (MVFLSSVETDQRKMSAGNHSSVTEFILAGLSEQPELQLRLF) the chain is on the extracellular side. An N-linked (GlcNAc...) asparagine glycan is attached at Asn18. A helical transmembrane segment spans residues 42–62 (LLFLGIYVVTVVGNLSMITLI). Residues 63 to 69 (GLSSHLH) lie on the Cytoplasmic side of the membrane. Residues 70–90 (TPMYYFLSGLSFIDLCHSTII) form a helical membrane-spanning segment. Residues 91–110 (TPKMLVNFVTEKNIISYPEC) are Extracellular-facing. Cysteines 110 and 192 form a disulfide. The chain crosses the membrane as a helical span at residues 111–130 (MTQLYFFLIFAIAECHMLAV). Over 131–154 (TAYDRYVAICSPLLYNVIMSYHHC) the chain is Cytoplasmic. A helical transmembrane segment spans residues 155–175 (FWLTVGVYVLGILGSTIHTGF). The Extracellular portion of the chain corresponds to 176–193 (MLRLFLCKTNVINHYFCD). Residues 194-214 (LFPLLGLSCSSTYINELLVLV) traverse the membrane as a helical segment. The Cytoplasmic portion of the chain corresponds to 215–217 (LSA). The helical transmembrane segment at 218-238 (FNILTPALTILASYIFIIASI) threads the bilayer. The Extracellular portion of the chain corresponds to 239–257 (LRIRSTEGRSKAFSTCSSH). The helical transmembrane segment at 258–278 (ILAVAVFFGSAAFMYLQPSSV) threads the bilayer. The Cytoplasmic segment spans residues 279-304 (SSMDQRKVSSVFYTTIVPMLNPQSIA).

Belongs to the G-protein coupled receptor 1 family.

The protein localises to the cell membrane. Functionally, odorant receptor. The chain is Olfactory receptor 8G2 from Homo sapiens (Human).